The following is a 449-amino-acid chain: UNC93-like protein MFSD11 (449 aa).

A helical transmembrane segment spans residues 8-28 (LFNIIILGVAFMFMFTAFQTC). Residue asparagine 40 is glycosylated (N-linked (GlcNAc...) asparagine). 5 helical membrane-spanning segments follow: residues 53-73 (AIIY…VAIV), 74-94 (GPQL…AVFN), 96-116 (PFPW…AVLW), 138-158 (IFWA…YFAW), and 170-190 (RTVF…FFLI). Serine 204 carries the post-translational modification Phosphoserine. Transmembrane regions (helical) follow at residues 239–259 (MLLL…FSGV), 277–297 (LIGL…SLFG), 309–329 (PVVL…FLNM), 359–379 (FLLG…LGFL), 385–405 (APAF…AFFY), and 410–430 (LLHW…LSFF).

Belongs to the unc-93 family.

Its subcellular location is the membrane. The protein is UNC93-like protein MFSD11 (MFSD11) of Pongo abelii (Sumatran orangutan).